The chain runs to 282 residues: Stage 0 sporulation protein J (282 aa).

The H-T-H motif DNA-binding region spans 139–158 (EQLAKRLGKSRPHIANHLRL).

The protein belongs to the ParB family.

It is found in the cytoplasm. The protein localises to the nucleoid. Required for the initiation of sporulation and for normal chromosome segregation. Antagonizes sporulation inhibition by Soj. It probably interacts with a specific DNA site and other proteins involved in partitioning and cell division, and antagonizes Soj in response to cell cycle events related to chromosome partitioning. This Bacillus subtilis (strain 168) protein is Stage 0 sporulation protein J.